We begin with the raw amino-acid sequence, 247 residues long: Fasciclin-like arabinogalactan protein 6 (247 aa).

A signal peptide spans 1–23 (MSSSLFSYVVLLIFLFTIPYIQS). In terms of domain architecture, FAS1 spans 36–182 (PINLTAILEA…LAVYVVDSVL (147 aa)). N-linked (GlcNAc...) asparagine glycosylation is found at Asn-38, Asn-57, Asn-70, Asn-142, and Asn-153. Residues 192–212 (TTPTGAPAPKSSTSSSDADSP) show a composition bias toward low complexity. A disordered region spans residues 192–221 (TTPTGAPAPKSSTSSSDADSPAADDEHKSA). Gly-222 carries the GPI-anchor amidated glycine lipid modification. The propeptide at 223 to 247 (SSVKRTSLGIVVSFALFCCSVIYIA) is removed in mature form.

Belongs to the fasciclin-like AGP family.

The protein localises to the cell membrane. Functionally, may be a cell surface adhesion protein. The sequence is that of Fasciclin-like arabinogalactan protein 6 (FLA6) from Arabidopsis thaliana (Mouse-ear cress).